The primary structure comprises 113 residues: Large ribosomal subunit protein bL17 (113 aa).

Belongs to the bacterial ribosomal protein bL17 family. Part of the 50S ribosomal subunit. Contacts protein L32.

This is Large ribosomal subunit protein bL17 from Clostridium botulinum (strain Alaska E43 / Type E3).